A 108-amino-acid polypeptide reads, in one-letter code: Integration host factor subunit alpha (108 aa).

Belongs to the bacterial histone-like protein family. In terms of assembly, heterodimer of an alpha and a beta chain.

Its function is as follows. This protein is one of the two subunits of integration host factor, a specific DNA-binding protein that functions in genetic recombination as well as in transcriptional and translational control. This chain is Integration host factor subunit alpha, found in Methylorubrum extorquens (strain CM4 / NCIMB 13688) (Methylobacterium extorquens).